Here is a 78-residue protein sequence, read N- to C-terminus: Large ribosomal subunit protein eL20 (78 aa).

It belongs to the eukaryotic ribosomal protein eL20 family. In terms of assembly, part of the 50S ribosomal subunit. Binds 23S rRNA.

The protein is Large ribosomal subunit protein eL20 of Nanoarchaeum equitans (strain Kin4-M).